A 342-amino-acid chain; its full sequence is Serpentine receptor class r-10 (342 aa).

Residues 1–11 (MTGELWLTLVD) are Extracellular-facing. Residues 12 to 32 (TADIVGFSMTFCVNIVLLFLL) traverse the membrane as a helical segment. Over 33-38 (KNRGKN) the chain is Cytoplasmic. The helical transmembrane segment at 39-59 (LGTYKHLMAFFSVFSIFYAII) threads the bilayer. Topologically, residues 60-92 (ESILRPIMHIENATFFLISRKRFNYSTRLGKIN) are extracellular. N-linked (GlcNAc...) asparagine glycans are attached at residues Asn-71 and Asn-83. The helical transmembrane segment at 93 to 113 (SAFYCACFATSFVVSGVHFVY) threads the bilayer. Residues 114 to 131 (RFFASCKPHLLRSFNMPY) are Cytoplasmic-facing. The chain crosses the membrane as a helical span at residues 132 to 152 (LLLWPLGCSIPVMMWASVSYF). Over 153 to 202 (LYPDTAFTEAAVTNVLNTHYHSIKKDNVSYIAYVYYQYDENGVRYVYLKN) the chain is Extracellular. Asn-179 carries an N-linked (GlcNAc...) asparagine glycan. The chain crosses the membrane as a helical span at residues 203 to 223 (LLGCFVHYFVMSATFVVMFIC). Residues 224-257 (GYLTWKTMRKHKTASDRTRQLQKQLFKALVLQTL) lie on the Cytoplasmic side of the membrane. A helical membrane pass occupies residues 258–278 (IPTIFMYAPTGVMFIAPFFSI). The Extracellular portion of the chain corresponds to 279–285 (NLNANAN). The helical transmembrane segment at 286-306 (FIVFCSFLYPGLDPLILILII) threads the bilayer. Over 307 to 342 (RDFRQTVFKFFCLRKKNSVDESRSTTRANMSQVATH) the chain is Cytoplasmic.

The protein belongs to the nematode receptor-like protein str family. In terms of assembly, interacts with odr-4.

Its subcellular location is the cell projection. It is found in the cilium membrane. Functionally, an odorant receptor which affects chemotaxis to the volatile odorant diacetyl. Specifies AWA neuronal cell fate via the odr-7 pathway. The protein is Serpentine receptor class r-10 of Caenorhabditis briggsae.